A 424-amino-acid chain; its full sequence is UDP-N-acetylglucosamine 1-carboxyvinyltransferase (424 aa).

22–23 (KN) contacts phosphoenolpyruvate. Arg-93 lines the UDP-N-acetyl-alpha-D-glucosamine pocket. Cys-117 (proton donor) is an active-site residue. The residue at position 117 (Cys-117) is a 2-(S-cysteinyl)pyruvic acid O-phosphothioketal. Residues 122–126 (RPVDL), 162–165 (KVSV), Asp-307, and Ile-329 each bind UDP-N-acetyl-alpha-D-glucosamine.

Belongs to the EPSP synthase family. MurA subfamily.

It is found in the cytoplasm. It carries out the reaction phosphoenolpyruvate + UDP-N-acetyl-alpha-D-glucosamine = UDP-N-acetyl-3-O-(1-carboxyvinyl)-alpha-D-glucosamine + phosphate. Its pathway is cell wall biogenesis; peptidoglycan biosynthesis. Its function is as follows. Cell wall formation. Adds enolpyruvyl to UDP-N-acetylglucosamine. This chain is UDP-N-acetylglucosamine 1-carboxyvinyltransferase, found in Histophilus somni (strain 129Pt) (Haemophilus somnus).